Reading from the N-terminus, the 725-residue chain is Palmitoyltransferase AKR1 (725 aa).

Residues 1-303 (MGTIAMASIN…LKDKRSFVTR (303 aa)) lie on the Cytoplasmic side of the membrane. ANK repeat units lie at residues 84–113 (EGITPLHWAAINNQYAMCKFLIEHGAEINR), 118–147 (SIATPLQWAAQRCHYYTVNLLLQHGADPLV), 151–180 (QGYNTLHISTFNGNVLLLVLLLHQGIPVDV), 184–213 (FGHTALMWAAYKGFPQCVDLFLRWGASVHA), and 217–246 (QGFTALHWALVKGSPGCILKLIEYGADRFA). A helical transmembrane segment spans residues 304–324 (FLFFWPFVLVWAMLVAMSSAP). Residues 325–326 (VY) are Lumenal-facing. A helical membrane pass occupies residues 327-347 (IGVPLGIAAVYAIQWVAQQVL). Residues 348–364 (EYAPSDMRHFHKTPWLT) lie on the Cytoplasmic side of the membrane. Residues 365–385 (GIFAATLFWTGVNWLTTVLFA) traverse the membrane as a helical segment. The Lumenal segment spans residues 386–397 (TTLGAPEGKGHG). A helical transmembrane segment spans residues 398–418 (ILNFLFALFFGFTVYFYIASM). Over 419-495 (RYDPGFVPKM…NCVGINNHRH (77 aa)) the chain is Cytoplasmic. The region spanning 451 to 501 (NFCVTCMIQTPLRSKHCRRCQRCVAKHDHHCPWVYNCVGINNHRHFFFYLI) is the DHHC domain. The active-site S-palmitoyl cysteine intermediate is C481. A helical membrane pass occupies residues 496–516 (FFFYLISLTMGIVSYDFLLYY). At 517–547 (YFDTVSKNASETCNVLSPTLCKYINADSYTS) the chain is on the lumenal side. A helical transmembrane segment spans residues 548–568 (ILAIWITMQLLWVTMLLFTQF). Residues 569–725 (IQVARAMTTY…YEAVGTEDVV (157 aa)) lie on the Cytoplasmic side of the membrane.

The protein belongs to the DHHC palmitoyltransferase family. AKR/ZDHHC17 subfamily.

The protein resides in the early endosome membrane. It localises to the golgi apparatus membrane. It carries out the reaction L-cysteinyl-[protein] + hexadecanoyl-CoA = S-hexadecanoyl-L-cysteinyl-[protein] + CoA. Functionally, palmitoyltransferase specific for casein kinase 1. In Gibberella zeae (strain ATCC MYA-4620 / CBS 123657 / FGSC 9075 / NRRL 31084 / PH-1) (Wheat head blight fungus), this protein is Palmitoyltransferase AKR1 (AKR1).